The sequence spans 78 residues: Protein SlyX homolog (78 aa).

This sequence belongs to the SlyX family.

This chain is Protein SlyX homolog, found in Xylella fastidiosa (strain 9a5c).